A 682-amino-acid polypeptide reads, in one-letter code: MPLLSQMQDQSGTTFAQLEALRQKLREYEYYYHVLDNPLVPDAEYDRLMNELKNLEWQHPEWITADSPTQRVGAKPLDGFAQVTHEIPMLSLDNAFSDEELDGFLRRMESYITEDPHTLAFCCEPKLDGLAVSILYVDGVLNQAATRGDGSTGEDITSNIRTIRNIPLKLNMDNPPARLEVRGEVFMPQKGFEALNERALEKGEKTFANPRNAAAGSLRQLDPKITRQRPLVLNAYGIGVYESDDELPVTHFERLQWLKSIGIPVNNEIRLATGREQLLAFYADIQAKRPTLGYDIDGAVLKVNDIGLQEQLGFISRSPRWAIAYKFPAQEEMTVLNDVEFQVGRTGAITPVAKLEPVFVAGVTVSNATLHNGDEIERLGIVIGDTVIIRRAGDVIPQIVGVVMERRPENAKKIEFPTACPVCESAVVRVEGEAVARCTGGLFCGAQRKEALKHFVSRKAMDIDGVGEKLIEQLMERELVHTPADLFKLEHTTLMRLERMGGKSAQNALNSIEKAKNTTLARFLFALGIRDVGEATAQNLANHFHNLDAIRAATFEQLQEVQDVGEVVANRIVRFWQEPHNVTVVEDLISQGIHWQDVVQVEIADNPLKGKSVVLTGTLTQLTRDQAKALLQSFGCKVSGSVSSKTDYLIAGEKAGSKLTKAQELGVKVLTEQEFIALTGEN.

NAD(+) is bound by residues 42-46 (DAEYD), 91-92 (SL), and glutamate 124. Lysine 126 functions as the N6-AMP-lysine intermediate in the catalytic mechanism. Positions 147, 184, 302, and 326 each coordinate NAD(+). Zn(2+) is bound by residues cysteine 420, cysteine 423, cysteine 438, and cysteine 444. Residues 603–682 (IADNPLKGKS…QEFIALTGEN (80 aa)) form the BRCT domain.

It belongs to the NAD-dependent DNA ligase family. LigA subfamily. It depends on Mg(2+) as a cofactor. Mn(2+) serves as cofactor.

The enzyme catalyses NAD(+) + (deoxyribonucleotide)n-3'-hydroxyl + 5'-phospho-(deoxyribonucleotide)m = (deoxyribonucleotide)n+m + AMP + beta-nicotinamide D-nucleotide.. DNA ligase that catalyzes the formation of phosphodiester linkages between 5'-phosphoryl and 3'-hydroxyl groups in double-stranded DNA using NAD as a coenzyme and as the energy source for the reaction. It is essential for DNA replication and repair of damaged DNA. This is DNA ligase from Actinobacillus pleuropneumoniae serotype 7 (strain AP76).